A 439-amino-acid chain; its full sequence is Protein translocase subunit SecY (439 aa).

The next 10 helical transmembrane spans lie at 19–39 (ILFT…TVPG), 68–88 (YSLF…VQLL), 116–136 (YITL…FQAM), 151–171 (LMIG…GEQI), 176–196 (FGSG…PSAV), 216–236 (WLFV…TTFV), 269–289 (VIPV…LQFL), 312–332 (WTGM…YSFV), 373–393 (VGAL…NVWG), and 396–416 (KIVA…IQAV).

The protein belongs to the SecY/SEC61-alpha family. As to quaternary structure, component of the Sec protein translocase complex. Heterotrimer consisting of SecY, SecE and SecG subunits. The heterotrimers can form oligomers, although 1 heterotrimer is thought to be able to translocate proteins. Interacts with the ribosome. Interacts with SecDF, and other proteins may be involved. Interacts with SecA.

The protein localises to the cell membrane. Functionally, the central subunit of the protein translocation channel SecYEG. Consists of two halves formed by TMs 1-5 and 6-10. These two domains form a lateral gate at the front which open onto the bilayer between TMs 2 and 7, and are clamped together by SecE at the back. The channel is closed by both a pore ring composed of hydrophobic SecY resides and a short helix (helix 2A) on the extracellular side of the membrane which forms a plug. The plug probably moves laterally to allow the channel to open. The ring and the pore may move independently. This chain is Protein translocase subunit SecY, found in Lactococcus lactis subsp. lactis (strain IL1403) (Streptococcus lactis).